The chain runs to 452 residues: UDP-N-acetylmuramoylalanine--D-glutamate ligase (452 aa).

Residue 119–125 (GSNGKTT) participates in ATP binding.

This sequence belongs to the MurCDEF family.

The protein localises to the cytoplasm. The enzyme catalyses UDP-N-acetyl-alpha-D-muramoyl-L-alanine + D-glutamate + ATP = UDP-N-acetyl-alpha-D-muramoyl-L-alanyl-D-glutamate + ADP + phosphate + H(+). It participates in cell wall biogenesis; peptidoglycan biosynthesis. Functionally, cell wall formation. Catalyzes the addition of glutamate to the nucleotide precursor UDP-N-acetylmuramoyl-L-alanine (UMA). The sequence is that of UDP-N-acetylmuramoylalanine--D-glutamate ligase from Streptococcus pyogenes serotype M4 (strain MGAS10750).